The sequence spans 1124 residues: Zinc finger E-box-binding homeobox 1 (1124 aa).

2 disordered regions span residues 1–124 (MADG…NHDP) and 142–163 (APEE…NGTP). The segment covering 18-30 (NNVTNYNTVVETN) has biased composition (low complexity). A phosphoserine mark is found at serine 31 and serine 33. Residues 44–62 (EESVTDAADCEGVPEDDLP) show a composition bias toward acidic residues. The segment covering 72–91 (SSEREGNAKNCWEDDRKEGQ) has biased composition (basic and acidic residues). The C2H2-type 1 zinc finger occupies 170-193 (LTCPYCDRGYKRFTSLKEHIKYRH). Glycyl lysine isopeptide (Lys-Gly) (interchain with G-Cter in SUMO2) cross-links involve residues lysine 186 and lysine 195. 2 consecutive C2H2-type zinc fingers follow at residues 200-222 (FSCS…MTSH) and 240-262 (FKCT…LRIH). The C2H2-type 4; atypical zinc-finger motif lies at 268-292 (YECPNCKKRFSHSGSYSSHISSKKC). Positions 304–327 (TGLKTSQCSSPSLSASPGSPTRPQ) are disordered. Lysine 307 is covalently cross-linked (Glycyl lysine isopeptide (Lys-Gly) (interchain with G-Cter in SUMO2)). A compositionally biased stretch (low complexity) spans 309-322 (SQCSSPSLSASPGS). Phosphoserine is present on residues serine 313 and serine 322. Glycyl lysine isopeptide (Lys-Gly) (interchain with G-Cter in SUMO2) cross-links involve residues lysine 331 and lysine 335. A Glycyl lysine isopeptide (Lys-Gly) (interchain with G-Cter in SUMO); alternate cross-link involves residue lysine 347. Lysine 347 is covalently cross-linked (Glycyl lysine isopeptide (Lys-Gly) (interchain with G-Cter in SUMO2); alternate). Residues lysine 439, lysine 493, lysine 504, lysine 515, lysine 548, and lysine 553 each participate in a glycyl lysine isopeptide (Lys-Gly) (interchain with G-Cter in SUMO2) cross-link. 2 disordered regions span residues 551 to 586 (DLKQ…SPSQ) and 636 to 714 (QISV…SSSR). Residues 581–640 (NLSPSQPPLKNLLSLLKAYYALNAQPSAEELSKIADSVNLPLDVVKKWFEKMQAGQISVQ) constitute a DNA-binding region (homeobox; atypical). Residues serine 642, serine 679, serine 686, serine 693, and serine 700 each carry the phosphoserine modification. The segment covering 656-687 (AKNNDQPQSANANEPQDSTVNLQSPLKMTNSP) has biased composition (polar residues). Residues 692–714 (GSTTNGSRSSTPSPSPLNLSSSR) show a composition bias toward low complexity. Threonine 702 carries the phosphothreonine modification. Serine 704 bears the Phosphoserine mark. Lysine 774 is covalently cross-linked (Glycyl lysine isopeptide (Lys-Gly) (interchain with G-Cter in SUMO); alternate). Lysine 774 is covalently cross-linked (Glycyl lysine isopeptide (Lys-Gly) (interchain with G-Cter in SUMO2); alternate). Residues 856-898 (PPLKVIQPNGNQDERQDTSSEGVSNVEDQNDSDSTPPKKKMRK) are disordered. Residues 874–890 (SSEGVSNVEDQNDSDST) show a composition bias toward polar residues. 2 C2H2-type zinc fingers span residues 904-926 (YACD…KYEH) and 932-954 (HECG…MRLH). The C2H2-type 7; atypical zinc finger occupies 960 to 981 (YQCDKCGKRFSHSGSYSQHMNH). The tract at residues 989-1124 (EAEERDSTEQ…QVSEEKTNEA (136 aa)) is disordered. 2 stretches are compositionally biased toward acidic residues: residues 1031-1052 (EEDE…ELQE) and 1062-1084 (DEEE…ENEG). Residues 1085 to 1099 (EEAKTEGLMKDDRAE) show a composition bias toward basic and acidic residues. A compositionally biased stretch (polar residues) spans 1100-1115 (SQASSLGQKVGESSEQ).

This sequence belongs to the delta-EF1/ZFH-1 C2H2-type zinc-finger family. As to quaternary structure, interacts (via N-terminus) with SMARCA4/BRG1. Post-translationally, ubiquitinated, leading to degradation in a proteasome-dependent manner. Deubiquitinated by USP51, leading to stabilization. As to expression, colocalizes with SMARCA4/BRG1 in E-cadherin-negative cells from established lines, and stroma of normal colon as well as in de-differentiated epithelial cells at the invasion front of colorectal carcinomas (at protein level). Expressed in heart and skeletal muscle, but not in liver, spleen, or pancreas.

Its subcellular location is the nucleus. In terms of biological role, acts as a transcriptional repressor. Inhibits interleukin-2 (IL-2) gene expression. Enhances or represses the promoter activity of the ATP1A1 gene depending on the quantity of cDNA and on the cell type. Represses E-cadherin promoter and induces an epithelial-mesenchymal transition (EMT) by recruiting SMARCA4/BRG1. Represses BCL6 transcription in the presence of the corepressor CTBP1. Positively regulates neuronal differentiation. Represses RCOR1 transcription activation during neurogenesis. Represses transcription by binding to the E box (5'-CANNTG-3'). In the absence of TGFB1, acts as a repressor of COL1A2 transcription via binding to the E-box in the upstream enhancer region. This is Zinc finger E-box-binding homeobox 1 from Homo sapiens (Human).